Consider the following 666-residue polypeptide: tRNA 5-methylaminomethyl-2-thiouridine biosynthesis bifunctional protein MnmC (666 aa).

The interval methionine 1–glutamate 245 is tRNA (mnm(5)s(2)U34)-methyltransferase. Residues isoleucine 270 to lysine 666 form an FAD-dependent cmnm(5)s(2)U34 oxidoreductase region.

The protein in the N-terminal section; belongs to the methyltransferase superfamily. tRNA (mnm(5)s(2)U34)-methyltransferase family. It in the C-terminal section; belongs to the DAO family. FAD serves as cofactor.

It localises to the cytoplasm. It carries out the reaction 5-aminomethyl-2-thiouridine(34) in tRNA + S-adenosyl-L-methionine = 5-methylaminomethyl-2-thiouridine(34) in tRNA + S-adenosyl-L-homocysteine + H(+). Catalyzes the last two steps in the biosynthesis of 5-methylaminomethyl-2-thiouridine (mnm(5)s(2)U) at the wobble position (U34) in tRNA. Catalyzes the FAD-dependent demodification of cmnm(5)s(2)U34 to nm(5)s(2)U34, followed by the transfer of a methyl group from S-adenosyl-L-methionine to nm(5)s(2)U34, to form mnm(5)s(2)U34. This chain is tRNA 5-methylaminomethyl-2-thiouridine biosynthesis bifunctional protein MnmC, found in Salmonella typhi.